The following is a 297-amino-acid chain: Probable terminal-alkyne amino-acid exporter (297 aa).

Transmembrane regions (helical) follow at residues 6–26 (AVWALVLTVVTWASAFPAIRV), 32–52 (GVAGLSLSRLTVASVALAIAA), 65–85 (LPMIALCGATGMSAYQVLLNW), 95–115 (ASLLIAIAPVFSVLLAAVFLG), 123–143 (IAGSAVAISGAAVIAVAGGHA), 150–170 (WVVLAAAVVQGVYHFATKPLL), 178–198 (VACYAMWAGTVFLLPLLPAMV), 212–232 (TVYLGLLPSAIGFVSWGYAVA), and 249–269 (VALVVAFVWLGEVPPPLALVG). EamA domains lie at 6-137 (AVWA…AVIA) and 150-281 (WVVL…MLIN).

It belongs to the EamA transporter family.

The protein localises to the cell membrane. Its function is as follows. Probably involved in the export of terminal alkyne-containing amino acids, namely L-propargylglycine (Pra) and L-beta-ethynylserine, that are antibiotics synthesized by enzymes encoded in the same gene cluster. The polypeptide is Probable terminal-alkyne amino-acid exporter (Streptantibioticus cattleyicolor (strain ATCC 35852 / DSM 46488 / JCM 4925 / NBRC 14057 / NRRL 8057) (Streptomyces cattleya)).